Consider the following 296-residue polypeptide: Sulfotransferase 1C2 (296 aa).

49–54 serves as a coordination point for 3'-phosphoadenylyl sulfate; the sequence is KSGTTW. 107–109 lines the substrate pocket; the sequence is RTH. The active-site Proton acceptor is His-109. Residues Arg-131, Ser-139, Tyr-194, and 228–233 each bind 3'-phosphoadenylyl sulfate; that span reads TSFEKM. Ser-139 is subject to Phosphoserine. At Ser-254 the chain carries Phosphoserine. 256-260 is a 3'-phosphoadenylyl sulfate binding site; the sequence is FMRKG.

This sequence belongs to the sulfotransferase 1 family. In terms of tissue distribution, found in gastrointestinal tract tissues, liver and kidney.

It localises to the cytoplasm. It is found in the lysosome. The protein resides in the mitochondrion. It carries out the reaction a phenol + 3'-phosphoadenylyl sulfate = an aryl sulfate + adenosine 3',5'-bisphosphate + H(+). It catalyses the reaction cholesterol + 3'-phosphoadenylyl sulfate = cholesterol sulfate + adenosine 3',5'-bisphosphate + H(+). Sulfotransferase that utilizes 3'-phospho-5'-adenylyl sulfate (PAPS) to catalyze the sulfate conjugation of phenolic compounds. Does not transfer sulfate to steroids, dopamine, acetaminophen, or alpha-naphthol. Except in mitochondria, where it can add sulfate to cholesterol producing cholesterol sulfate, which alters mitochondrial membrane organization, and impacts protein complex mobility increasing state-III respiration, thereby modulating mitochondrial respiration. Catalyzes the sulfation of the carcinogenic N-hydroxy-2-acetylaminofluorene leading to highly reactive intermediates capable of forming DNA adducts, potentially resulting in mutagenesis. This is Sulfotransferase 1C2 (SULT1C2) from Oryctolagus cuniculus (Rabbit).